Reading from the N-terminus, the 137-residue chain is BolA-like protein 1 (137 aa).

Serine 81 carries the post-translational modification Phosphoserine. A disordered region spans residues 114 to 137; it reads WGENSQLDTSPPCLGGNKKTLGTP.

Belongs to the BolA/IbaG family. Interacts with GLRX5.

It is found in the mitochondrion. In terms of biological role, acts as a mitochondrial iron-sulfur (Fe-S) cluster assembly factor that facilitates (Fe-S) cluster insertion into a subset of mitochondrial proteins. Probably acts together with the monothiol glutaredoxin GLRX5. May protect cells against oxidative stress. The polypeptide is BolA-like protein 1 (BOLA1) (Pongo abelii (Sumatran orangutan)).